Here is a 342-residue protein sequence, read N- to C-terminus: L-threonine 3-dehydrogenase (342 aa).

Cys38 is a Zn(2+) binding site. Catalysis depends on charge relay system residues Thr40 and His43. The Zn(2+) site is built by His63 and Glu64. NAD(+) is bound by residues Ile175, Asp195, Arg200, 263-265, and 287-288; these read LGI and VY.

This sequence belongs to the zinc-containing alcohol dehydrogenase family. In terms of assembly, homotetramer. It depends on Zn(2+) as a cofactor.

It localises to the cytoplasm. The catalysed reaction is L-threonine + NAD(+) = (2S)-2-amino-3-oxobutanoate + NADH + H(+). Its pathway is amino-acid degradation; L-threonine degradation via oxydo-reductase pathway; glycine from L-threonine: step 1/2. Its function is as follows. Catalyzes the NAD(+)-dependent oxidation of L-threonine to 2-amino-3-ketobutyrate. The chain is L-threonine 3-dehydrogenase from Ruegeria pomeroyi (strain ATCC 700808 / DSM 15171 / DSS-3) (Silicibacter pomeroyi).